The sequence spans 286 residues: MLKYPEIDPVALSLGSVTVFGKTINLPDIHWYGLMYLFGFILCWAVGTYRAGKPHNVVHKSWLEDLVFYVAMGVVLGGRCGYVFFYNFGAFLDDPLWLFRVWEGGMSFHGGLLGVILAMMLYARKMQVRFLDLMDFVAPLVPIGLGLGRIGNFIGQELWGRVTTLPIGMVFPKDPGVARHPSQLYQAALEGLVLFAVLFWFSSKPRPRAAVASLFLILYGCFRFAVEFVREPDAHIGFDMFGWLTRGQELSLPMIIIGALIFFYAYRHPAYAEKAPDPRANGSKKG.

7 helical membrane-spanning segments follow: residues 29–49, 66–86, 101–121, 130–150, 181–201, 209–229, and 250–270; these read IHWY…VGTY, LVFY…VFFY, VWEG…AMML, FLDL…LGRI, PSQL…LFWF, AAVA…VEFV, and LSLP…RHPA. Arg149 is a binding site for a 1,2-diacyl-sn-glycero-3-phospho-(1'-sn-glycerol).

The protein belongs to the Lgt family.

It localises to the cell inner membrane. The catalysed reaction is L-cysteinyl-[prolipoprotein] + a 1,2-diacyl-sn-glycero-3-phospho-(1'-sn-glycerol) = an S-1,2-diacyl-sn-glyceryl-L-cysteinyl-[prolipoprotein] + sn-glycerol 1-phosphate + H(+). It participates in protein modification; lipoprotein biosynthesis (diacylglyceryl transfer). Catalyzes the transfer of the diacylglyceryl group from phosphatidylglycerol to the sulfhydryl group of the N-terminal cysteine of a prolipoprotein, the first step in the formation of mature lipoproteins. In Teredinibacter turnerae (strain ATCC 39867 / T7901), this protein is Phosphatidylglycerol--prolipoprotein diacylglyceryl transferase.